A 499-amino-acid chain; its full sequence is Phenylalanine--tRNA ligase alpha subunit (499 aa).

Residues T330, 372–374, and Y412 each bind L-phenylalanine; that span reads QVE. E414 lines the Mg(2+) pocket. F438 provides a ligand contact to L-phenylalanine.

It belongs to the class-II aminoacyl-tRNA synthetase family. Phe-tRNA synthetase alpha subunit type 2 subfamily. In terms of assembly, tetramer of two alpha and two beta subunits. Mg(2+) is required as a cofactor.

Its subcellular location is the cytoplasm. The catalysed reaction is tRNA(Phe) + L-phenylalanine + ATP = L-phenylalanyl-tRNA(Phe) + AMP + diphosphate + H(+). In Schizosaccharomyces pombe (strain 972 / ATCC 24843) (Fission yeast), this protein is Phenylalanine--tRNA ligase alpha subunit (frs2).